Here is a 275-residue protein sequence, read N- to C-terminus: 2,3,4,5-tetrahydropyridine-2,6-dicarboxylate N-succinyltransferase (275 aa).

Positions 106 and 143 each coordinate substrate.

This sequence belongs to the transferase hexapeptide repeat family. As to quaternary structure, homotrimer.

The protein localises to the cytoplasm. The catalysed reaction is (S)-2,3,4,5-tetrahydrodipicolinate + succinyl-CoA + H2O = (S)-2-succinylamino-6-oxoheptanedioate + CoA. The protein operates within amino-acid biosynthesis; L-lysine biosynthesis via DAP pathway; LL-2,6-diaminopimelate from (S)-tetrahydrodipicolinate (succinylase route): step 1/3. This chain is 2,3,4,5-tetrahydropyridine-2,6-dicarboxylate N-succinyltransferase, found in Cupriavidus pinatubonensis (strain JMP 134 / LMG 1197) (Cupriavidus necator (strain JMP 134)).